A 307-amino-acid chain; its full sequence is N-acetylmuramic acid 6-phosphate etherase (307 aa).

One can recognise an SIS domain in the interval 57–220 (IIEAFKTNGR…TTASMIGVGK (164 aa)). Catalysis depends on Glu85, which acts as the Proton donor. Residue Glu116 is part of the active site.

The protein belongs to the GCKR-like family. MurNAc-6-P etherase subfamily. As to quaternary structure, homodimer.

It catalyses the reaction N-acetyl-D-muramate 6-phosphate + H2O = N-acetyl-D-glucosamine 6-phosphate + (R)-lactate. It participates in amino-sugar metabolism; N-acetylmuramate degradation. Its function is as follows. Specifically catalyzes the cleavage of the D-lactyl ether substituent of MurNAc 6-phosphate, producing GlcNAc 6-phosphate and D-lactate. In Alkaliphilus metalliredigens (strain QYMF), this protein is N-acetylmuramic acid 6-phosphate etherase.